The following is a 32-amino-acid chain: Cytochrome b6-f complex subunit 7 (32 aa).

The helical transmembrane segment at 5 to 25 threads the bilayer; sequence IFTVAGVMWALVLTGLSVGFG.

This sequence belongs to the PetM family. As to quaternary structure, the 4 large subunits of the cytochrome b6-f complex are cytochrome b6, subunit IV (17 kDa polypeptide, PetD), cytochrome f and the Rieske protein, while the 4 small subunits are PetG, PetL, PetM and PetN. The complex functions as a dimer.

Its subcellular location is the plastid. The protein localises to the chloroplast thylakoid membrane. In terms of biological role, component of the cytochrome b6-f complex, which mediates electron transfer between photosystem II (PSII) and photosystem I (PSI), cyclic electron flow around PSI, and state transitions. This chain is Cytochrome b6-f complex subunit 7, found in Emiliania huxleyi (Coccolithophore).